The following is a 189-amino-acid chain: Pyridoxal 5'-phosphate synthase subunit PdxT (189 aa).

47-49 (GES) is an L-glutamine binding site. Catalysis depends on Cys79, which acts as the Nucleophile. Residues Arg106 and 135 to 136 (IR) each bind L-glutamine. Active-site charge relay system residues include His171 and Glu173.

Belongs to the glutaminase PdxT/SNO family. As to quaternary structure, in the presence of PdxS, forms a dodecamer of heterodimers. Only shows activity in the heterodimer.

The catalysed reaction is aldehydo-D-ribose 5-phosphate + D-glyceraldehyde 3-phosphate + L-glutamine = pyridoxal 5'-phosphate + L-glutamate + phosphate + 3 H2O + H(+). It carries out the reaction L-glutamine + H2O = L-glutamate + NH4(+). Its pathway is cofactor biosynthesis; pyridoxal 5'-phosphate biosynthesis. In terms of biological role, catalyzes the hydrolysis of glutamine to glutamate and ammonia as part of the biosynthesis of pyridoxal 5'-phosphate. The resulting ammonia molecule is channeled to the active site of PdxS. The polypeptide is Pyridoxal 5'-phosphate synthase subunit PdxT (Desulforudis audaxviator (strain MP104C)).